Here is a 394-residue protein sequence, read N- to C-terminus: 8-amino-7-oxononanoate synthase (394 aa).

Position 21 (arginine 21) interacts with substrate. 112-113 (GY) is a binding site for pyridoxal 5'-phosphate. Histidine 137 lines the substrate pocket. Serine 183, histidine 211, and threonine 239 together coordinate pyridoxal 5'-phosphate. Lysine 242 is modified (N6-(pyridoxal phosphate)lysine). Threonine 358 contacts substrate.

It belongs to the class-II pyridoxal-phosphate-dependent aminotransferase family. BioF subfamily. Homodimer. Pyridoxal 5'-phosphate is required as a cofactor.

The catalysed reaction is 6-carboxyhexanoyl-[ACP] + L-alanine + H(+) = (8S)-8-amino-7-oxononanoate + holo-[ACP] + CO2. It functions in the pathway cofactor biosynthesis; biotin biosynthesis. In terms of biological role, catalyzes the decarboxylative condensation of pimeloyl-[acyl-carrier protein] and L-alanine to produce 8-amino-7-oxononanoate (AON), [acyl-carrier protein], and carbon dioxide. The chain is 8-amino-7-oxononanoate synthase from Paraburkholderia phymatum (strain DSM 17167 / CIP 108236 / LMG 21445 / STM815) (Burkholderia phymatum).